A 3103-amino-acid polypeptide reads, in one-letter code: Extracellular matrix protein 3 (3103 aa).

An N-terminal signal peptide occupies residues 1–19 (MASALLCFLAAILPGMIAA). Topologically, residues 20-3047 (QNTWVLGTSD…TYELAPKGTN (3028 aa)) are extracellular. CSPG repeat units lie at residues 289–388 (PPSL…LEIV), 411–499 (APVV…FRMT), 520–630 (APIV…FRVV), 656–762 (PPEM…FVVQ), 784–875 (QPPT…LEIT), 901–993 (LPPG…LTLS), 1022–1124 (APNV…FRCT), 1145–1238 (EEPQ…VLLT), 1259–1357 (TPRL…FDIT), 1378–1470 (VHPS…FQVT), 1490–1579 (KEPV…FIVT), and 1613–1710 (APQI…VEVR). Asn-330 and Asn-453 each carry an N-linked (GlcNAc...) asparagine glycan. N-linked (GlcNAc...) asparagine glycans are attached at residues Asn-989, Asn-1024, Asn-1042, Asn-1207, Asn-1294, Asn-1321, and Asn-1327. Asn-1542, Asn-1674, Asn-1679, Asn-1725, and Asn-1739 each carry an N-linked (GlcNAc...) asparagine glycan. 4 consecutive Calx-beta domains span residues 1717–1816 (LPNQ…IILH), 1829–1942 (AVVT…VKLS), 1956–2062 (NVII…LVLN), and 2077–2179 (ITIN…LVLG). 5 N-linked (GlcNAc...) asparagine glycosylation sites follow: Asn-2080, Asn-2195, Asn-2274, Asn-2385, and Asn-2932. Positions 2197 to 2302 (TVVTVHDVGD…MREAFTLHIT (106 aa)) constitute a Calx-beta 5 domain. A disordered region spans residues 2983 to 3013 (SSGIGKRETEHHAISSRQRRQANSEALVDPA). Residues 3048–3068 (VVMIAVVIGVILIILLVALVI) form a helical membrane-spanning segment. Residues 3069 to 3103 (GVVVRRRQAKQQPVVVVNGSAKVVSNVHFDDNTEV) lie on the Cytoplasmic side of the membrane.

It belongs to the FRAS1 family. As to expression, component of extracellular matrix fibers that interact with PMC filopodia during gastrulation (at protein level).

It is found in the cell membrane. Its function is as follows. Extracellular matrix protein that may serve as substrate for the migratory primary mesenchyme cells (PMCs), the interaction possibly providing guidance information to migrating PMCs. The protein is Extracellular matrix protein 3 (ECM3) of Lytechinus variegatus (Green sea urchin).